A 216-amino-acid polypeptide reads, in one-letter code: Large ribosomal subunit protein uL3 (216 aa).

The tract at residues 119-143 (GYQGNIHKDGQSRGPMAHGSRYHRR) is disordered.

The protein belongs to the universal ribosomal protein uL3 family. Part of the 50S ribosomal subunit. Forms a cluster with proteins L14 and L19.

Functionally, one of the primary rRNA binding proteins, it binds directly near the 3'-end of the 23S rRNA, where it nucleates assembly of the 50S subunit. The polypeptide is Large ribosomal subunit protein uL3 (Levilactobacillus brevis (strain ATCC 367 / BCRC 12310 / CIP 105137 / JCM 1170 / LMG 11437 / NCIMB 947 / NCTC 947) (Lactobacillus brevis)).